The chain runs to 248 residues: Protein maestro (248 aa).

The interval 1–21 (MDQRQRRILGQPLSIPTSQPK) is disordered. The stretch at 128 to 163 (SFFIDITLQTRTLLDDENDSLRYSAFVLFGQLAAFA) is one HEAT repeat.

In terms of tissue distribution, ubiquitous.

It is found in the nucleus. Its subcellular location is the nucleolus. This is Protein maestro (MRO) from Homo sapiens (Human).